The following is a 595-amino-acid chain: Protein LUTEIN DEFICIENT 5, chloroplastic (595 aa).

The transit peptide at 1–28 (MAMAFPLSYTPTITVKPVTYSRRSNFVV) directs the protein to the chloroplast. Residue Cys516 participates in heme binding.

This sequence belongs to the cytochrome P450 family. Heme serves as cofactor.

It is found in the plastid. Its subcellular location is the chloroplast. In terms of biological role, heme-containing cytochrome P450 involved in the biosynthesis of xanthophylls. Specific for beta-ring hydroxylation of alpha- and beta-carotene. Also has a low activity toward the epsilon-rings of alpha-carotene. The beta-ring of alpha-carotene is the preferred substrate in planta. This chain is Protein LUTEIN DEFICIENT 5, chloroplastic (CYP97A3), found in Arabidopsis thaliana (Mouse-ear cress).